The primary structure comprises 522 residues: Glucans biosynthesis protein G (522 aa).

A signal peptide spans 1–33; the sequence is MLDNKFGFKQRVASLRWLSAAIMLSVSAVPAWA.

Belongs to the OpgD/OpgG family.

The protein localises to the periplasm. Its pathway is glycan metabolism; osmoregulated periplasmic glucan (OPG) biosynthesis. Involved in the biosynthesis of osmoregulated periplasmic glucans (OPGs). In Pectobacterium atrosepticum (strain SCRI 1043 / ATCC BAA-672) (Erwinia carotovora subsp. atroseptica), this protein is Glucans biosynthesis protein G.